The primary structure comprises 430 residues: Serine hydroxymethyltransferase (430 aa).

Residues L126 and G130 to L132 contribute to the (6S)-5,6,7,8-tetrahydrofolate site. N6-(pyridoxal phosphate)lysine is present on K235.

Belongs to the SHMT family. In terms of assembly, homodimer. Requires pyridoxal 5'-phosphate as cofactor.

The protein localises to the cytoplasm. The catalysed reaction is (6R)-5,10-methylene-5,6,7,8-tetrahydrofolate + glycine + H2O = (6S)-5,6,7,8-tetrahydrofolate + L-serine. It participates in one-carbon metabolism; tetrahydrofolate interconversion. The protein operates within amino-acid biosynthesis; glycine biosynthesis; glycine from L-serine: step 1/1. Functionally, catalyzes the reversible interconversion of serine and glycine with tetrahydrofolate (THF) serving as the one-carbon carrier. This reaction serves as the major source of one-carbon groups required for the biosynthesis of purines, thymidylate, methionine, and other important biomolecules. Also exhibits THF-independent aldolase activity toward beta-hydroxyamino acids, producing glycine and aldehydes, via a retro-aldol mechanism. The chain is Serine hydroxymethyltransferase from Leifsonia xyli subsp. xyli (strain CTCB07).